We begin with the raw amino-acid sequence, 283 residues long: MPFVIVSGLSGSGKSTALRTLEDAGFFITDNLPPELWNAMHDLVTARGIENVAVSTDTRTREFLAALEPSYVRLSRRREDLRVLFLEANAEVLLGRYNLSRREHPLGETLMVDFARERELLAPLRGIADTVIDTTDLSAAQLSQRVMHLFRLEHAFTLRLLSFGFKHAPPRDADLVLDVRSLPNPYYDETLRSKSGRQPDVAAYVFRDAEAEQFYGELRHFVQTAAERARASGRHSYTVGIGCTGGQHRSVAVAERLLRELQASSIETELMDHRDMREGGEPT.

8–15 is an ATP binding site; the sequence is GLSGSGKS. Position 57–60 (57–60) interacts with GTP; that stretch reads DTRT.

It belongs to the RapZ-like family.

Its function is as follows. Displays ATPase and GTPase activities. The protein is Nucleotide-binding protein DR_1434 of Deinococcus radiodurans (strain ATCC 13939 / DSM 20539 / JCM 16871 / CCUG 27074 / LMG 4051 / NBRC 15346 / NCIMB 9279 / VKM B-1422 / R1).